The following is a 622-amino-acid chain: MDVNRKRMVRMASAQRSEMLVRLSGKAKRWTVGGGGEVETHTFHTFCAGQKSYKSVVRRQRPRIARRDSRPSHPIANRGMNMLVHDLGFSHRACDRCHGQKLRCRRENNSDTCVRCARAGVRCTPRPMRLRSRAQSTKNTQQQQSQSPANGGSTQQLHVNQEQGPNDTNDEHSDHFEYLPTSLLDMPTDLNMGMDPSSLQVDIHPALTAPYGPEGSVHTSQPSGPQAPSHLRTAEQAGQTRWSDAPNLDTSDELYDFSLPATMRSSFPATYHRHRASLARNMSPQPAHQQGRDDMMVDFDQAEGNPRGSDGKDSRADSGYGNELSPSDLLRSPYGDAPDSDSELQPRGNSQDQGEQSNSILDTRHQNMTSWIRRLSDTNVQLHQHMQSIPLVGTGKKTRGSGAGTSLSPMELPVDSTFKLSSQYTGLLTSICARLQACRSCNDSQALAQLALDQPSQLLVLSSYMCLLASYDRILQHIEAWLKVRLKMGVRGSAMTLDDDESSSCFPTQLPSLAVGSFEVPKTSSIQSLVLTCIMETNVMHMHSLISEIMRPVSHPATGSASKTAASGPPAAEKRPGNGAADAGDGLSTVAKVTLQAIEANEDSTLRLVHTVSRLALQRVML.

The zn(2)-C6 fungal-type DNA-binding region spans Cys-94–Cys-123. 4 disordered regions span residues Pro-127 to His-175, Ala-206 to Leu-248, Phe-299 to Ile-360, and Pro-556 to Asp-585. Composition is skewed to polar residues over residues Pro-148–Asp-167, Val-217–Gln-226, and Arg-347–Ile-360. The segment covering Pro-556–Ala-571 has biased composition (low complexity).

The protein localises to the nucleus. Functionally, transcription factor that regulates the expression of the gene clusters that mediate the biosynthesis of pseurotin and fumagillin. This Aspergillus fumigatus (strain ATCC MYA-4609 / CBS 101355 / FGSC A1100 / Af293) (Neosartorya fumigata) protein is C6 finger transcription factor fumR.